The primary structure comprises 212 residues: Chloramphenicol acetyltransferase (212 aa).

Catalysis depends on His186, which acts as the Proton acceptor.

The protein belongs to the chloramphenicol acetyltransferase family. In terms of assembly, homotrimer.

The enzyme catalyses chloramphenicol + acetyl-CoA = chloramphenicol 3-acetate + CoA. This enzyme is an effector of chloramphenicol resistance in bacteria. The sequence is that of Chloramphenicol acetyltransferase (catD) from Clostridioides difficile (Peptoclostridium difficile).